We begin with the raw amino-acid sequence, 456 residues long: CBL-interacting protein kinase 16 (456 aa).

One can recognise a Protein kinase domain in the interval 22-277 (YELGRLLGQG…IPEIMRTPWF (256 aa)). Residues 28–36 (LGQGTFAKV) and lysine 51 each bind ATP. The Proton acceptor role is filled by aspartate 145. Residues 163 to 192 (DFGLAALPEQLRQDGLLHTQCGTPAYVAPE) form an activation loop region. In terms of domain architecture, NAF spans 309-335 (AMSPRTCNAFQLISSMSSGFDLSGMFE). The segment at 339–368 (KAATVFTSRAPAATVIQKLEAVGRSLGYSA) is PPI.

It belongs to the protein kinase superfamily. CAMK Ser/Thr protein kinase family. SNF1 subfamily. The cofactor is Mn(2+).

It catalyses the reaction L-seryl-[protein] + ATP = O-phospho-L-seryl-[protein] + ADP + H(+). The enzyme catalyses L-threonyl-[protein] + ATP = O-phospho-L-threonyl-[protein] + ADP + H(+). Its function is as follows. CIPK serine-threonine protein kinases interact with CBL proteins. Binding of a CBL protein to the regulatory NAF domain of CIPK protein lead to the activation of the kinase in a calcium-dependent manner. This is CBL-interacting protein kinase 16 (CIPK16) from Oryza sativa subsp. japonica (Rice).